The sequence spans 900 residues: Probable beta-mannosidase (900 aa).

An N-terminal signal peptide occupies residues 1–21; the sequence is MRTSLVVCLFWLLFQLHTTHG. Residues Asn-38, Asn-42, and Asn-131 are each glycosylated (N-linked (GlcNAc...) asparagine). The active-site Proton donor is Glu-463. Residues Asn-477, Asn-576, Asn-661, and Asn-738 are each glycosylated (N-linked (GlcNAc...) asparagine).

Belongs to the glycosyl hydrolase 2 family.

The protein resides in the lysosome. It catalyses the reaction Hydrolysis of terminal, non-reducing beta-D-mannose residues in beta-D-mannosides.. The polypeptide is Probable beta-mannosidase (Caenorhabditis elegans).